A 245-amino-acid chain; its full sequence is Sugar fermentation stimulation protein homolog (245 aa).

This sequence belongs to the SfsA family.

In Rhodospirillum rubrum (strain ATCC 11170 / ATH 1.1.1 / DSM 467 / LMG 4362 / NCIMB 8255 / S1), this protein is Sugar fermentation stimulation protein homolog.